The primary structure comprises 655 residues: Gastrulation defective protein 1 homolog (655 aa).

Disordered stretches follow at residues M1–I54 and A83–S165. 3 stretches are compositionally biased toward basic and acidic residues: residues R23–T36, Q91–D115, and T134–D146. Residues E147–Q164 are compositionally biased toward acidic residues. WD repeat units lie at residues H180–R219, C227–K268, G281–Q321, G330–T369, Q377–H416, F422–R467, and V470–K510. Disordered stretches follow at residues K544–S580 and A633–K655. Composition is skewed to basic and acidic residues over residues K554–R564 and L639–K655.

It belongs to the WD repeat GAD-1 family.

This is Gastrulation defective protein 1 homolog from Drosophila melanogaster (Fruit fly).